A 695-amino-acid chain; its full sequence is Spermidine/spermine N(1)-acetyltransferase-like protein 1 (695 aa).

Polar residues-rich tracts occupy residues 1–39, 52–68, and 78–98; these read MNQS…QGSA, PSMS…NLPD, and DTWQ…SQLV. Disordered stretches follow at residues 1 to 274, 290 to 332, 344 to 375, and 387 to 493; these read MNQS…MNQM, DMKQ…PGMW, ASIS…NQSG, and RQSG…GLSQ. The span at 105-122 shows a compositional bias: low complexity; the sequence is SQPDPSQPGPSQSGPSQS. 7 stretches are compositionally biased toward polar residues: residues 123–179, 197–208, 231–266, 294–310, 355–375, 389–422, and 459–471; these read RMRQ…TGLS, GVQQPGISQQVP, PDTS…QPSP, PSMS…NLPD, APSQ…NQSG, SGGS…TGLS, and PGTS…QTGM. One can recognise an N-acetyltransferase domain in the interval 529 to 695; the sequence is FQIRHAEAGD…EELLDMAWEE (167 aa). 552–553 is a binding site for substrate; sequence CE. Residues 618 to 620 and 626 to 631 contribute to the acetyl-CoA site; these read FYV and GLGIGA. Substrate contacts are provided by residues 650 to 652 and Glu-676; that span reads HFL.

The protein belongs to the acetyltransferase family.

This Homo sapiens (Human) protein is Spermidine/spermine N(1)-acetyltransferase-like protein 1 (SATL1).